We begin with the raw amino-acid sequence, 101 residues long: Small ribosomal subunit protein bS18c (101 aa).

This sequence belongs to the bacterial ribosomal protein bS18 family. As to quaternary structure, part of the 30S ribosomal subunit.

The protein localises to the plastid. It is found in the chloroplast. This chain is Small ribosomal subunit protein bS18c, found in Populus alba (White poplar).